A 190-amino-acid chain; its full sequence is U1 small nuclear ribonucleoprotein C-1 (190 aa).

The Matrin-type zinc finger occupies 4-36; that stretch reads YYCDYCDVFLVSESPSVRKAHNSGRNHLTNVRD. The segment at 57–190 is disordered; it reads FETGGGNSTS…PDRARQLGLI (134 aa). Residues 72–82 are compositionally biased toward pro residues; sequence GNPPGSQPGPP. Low complexity predominate over residues 109 to 124; it reads AMLALMNGQNGMSSPG. Pro residues predominate over residues 125 to 141; that stretch reads SGPPPMRFAGPPIPNNM. Over residues 180 to 190 the composition is skewed to basic and acidic residues; it reads NPDRARQLGLI.

It belongs to the U1 small nuclear ribonucleoprotein C family. U1 snRNP is composed of the 7 core Sm proteins B/B', D1, D2, D3, E, F and G that assemble in a heptameric protein ring on the Sm site of the small nuclear RNA to form the core snRNP, and at least 3 U1 snRNP-specific proteins U1-70K, U1-A and U1-C. U1-C interacts with U1 snRNA and the 5' splice-site region of the pre-mRNA.

Its subcellular location is the nucleus. Its function is as follows. Component of the spliceosomal U1 snRNP, which is essential for recognition of the pre-mRNA 5' splice-site and the subsequent assembly of the spliceosome. U1-C is directly involved in initial 5' splice-site recognition for both constitutive and regulated alternative splicing. The interaction with the 5' splice-site seems to precede base-pairing between the pre-mRNA and the U1 snRNA. Stimulates commitment or early (E) complex formation by stabilizing the base pairing of the 5' end of the U1 snRNA and the 5' splice-site region. This is U1 small nuclear ribonucleoprotein C-1 from Puccinia graminis f. sp. tritici (strain CRL 75-36-700-3 / race SCCL) (Black stem rust fungus).